The following is a 165-amino-acid chain: Transmembrane protein 128 (165 aa).

4 helical membrane passes run 49–69, 81–101, 119–139, and 144–164; these read NIHS…VDFF, WFLC…YCIV, LIPI…IALW, and FFTP…ITLL.

Its subcellular location is the membrane. This Homo sapiens (Human) protein is Transmembrane protein 128 (TMEM128).